Reading from the N-terminus, the 608-residue chain is Albumin (608 aa).

An N-terminal signal peptide occupies residues 1–18 (MKWVTFLLLLFVSGSAFS). The propeptide occupies 19–24 (RGVFRR). Albumin domains follow at residues 19 to 211 (RGVF…GVKE), 212 to 403 (KALV…EFQP), and 404 to 601 (LVEE…NLVT). His27 contacts Cu cation. The residue at position 29 (Ser29) is a Phosphoserine. Ca(2+) is bound by residues Glu30 and Asp37. An intrachain disulfide couples Cys77 to Cys86. A phosphoserine mark is found at Ser82 and Ser89. His91 contacts Zn(2+). Disulfide bonds link Cys99–Cys115, Cys114–Cys125, Cys148–Cys193, Cys192–Cys201, Cys224–Cys270, and Cys269–Cys277. Lys229 is subject to N6-succinyllysine. Position 268 (Glu268) interacts with Ca(2+). Residues His271 and Asp273 each contribute to the Zn(2+) site. The Ca(2+) site is built by Asp273, Glu276, and Asp279. 8 disulfide bridges follow: Cys289–Cys303, Cys302–Cys313, Cys340–Cys385, Cys384–Cys393, Cys416–Cys462, Cys461–Cys472, Cys485–Cys501, and Cys500–Cys511. Ser297 bears the Phosphoserine mark. Position 443 is a phosphoserine (Ser443). Thr444 and Thr446 each carry phosphothreonine. Residue Lys460 is modified to N6-succinyllysine. Residue Ser513 is modified to Phosphoserine. Cystine bridges form between Cys538/Cys583 and Cys582/Cys591. Position 543 is an N6-succinyllysine (Lys543). Lys558 is modified (N6-methyllysine). Thr570 is modified (phosphothreonine). N6-succinyllysine is present on Lys588.

This sequence belongs to the ALB/AFP/VDB family. Part of a complex composed of complement component C3, CLCA1/CLCA3, A2ML1/OH and ALB/serum albumin. Interacts with FCGRT; this interaction regulates ALB homeostasis. Interacts with TASOR. In plasma, occurs in a covalently-linked complex with chromophore-bound alpha-1-microglobulin; this interaction does not prevent fatty acid binding to ALB. In terms of processing, phosphorylated by FAM20C in the extracellular medium. In terms of tissue distribution, plasma. Expressed in the granular cells within the cerebellum.

The protein localises to the secreted. Functionally, binds water, Ca(2+), Na(+), K(+), fatty acids, hormones, bilirubin and drugs. Its main function is the regulation of the colloidal osmotic pressure of blood. Major zinc transporter in plasma, typically binds about 80% of all plasma zinc. Major calcium and magnesium transporter in plasma, binds approximately 45% of circulating calcium and magnesium in plasma. Potentially has more than two calcium-binding sites and might additionally bind calcium in a non-specific manner. The shared binding site between zinc and calcium at residue Asp-273 suggests a crosstalk between zinc and calcium transport in the blood. The rank order of affinity is zinc &gt; calcium &gt; magnesium. Binds to the bacterial siderophore enterobactin and inhibits enterobactin-mediated iron uptake of E.coli from ferric transferrin, and may thereby limit the utilization of iron and growth of enteric bacteria such as E.coli. Does not prevent iron uptake by the bacterial siderophore aerobactin. This chain is Albumin (Alb), found in Mus musculus (Mouse).